Reading from the N-terminus, the 331-residue chain is Ferredoxin--NADP reductase (331 aa).

FAD contacts are provided by E34, Q42, Y47, V87, F121, D285, and T325.

Belongs to the ferredoxin--NADP reductase type 2 family. In terms of assembly, homodimer. It depends on FAD as a cofactor.

It catalyses the reaction 2 reduced [2Fe-2S]-[ferredoxin] + NADP(+) + H(+) = 2 oxidized [2Fe-2S]-[ferredoxin] + NADPH. The chain is Ferredoxin--NADP reductase from Lactiplantibacillus plantarum (strain ATCC BAA-793 / NCIMB 8826 / WCFS1) (Lactobacillus plantarum).